A 274-amino-acid polypeptide reads, in one-letter code: Putative phosphoenolpyruvate synthase regulatory protein (274 aa).

Position 157 to 164 (157 to 164 (GVSRCGKT)) interacts with ADP.

The protein belongs to the pyruvate, phosphate/water dikinase regulatory protein family. PSRP subfamily.

It carries out the reaction [pyruvate, water dikinase] + ADP = [pyruvate, water dikinase]-phosphate + AMP + H(+). The catalysed reaction is [pyruvate, water dikinase]-phosphate + phosphate + H(+) = [pyruvate, water dikinase] + diphosphate. In terms of biological role, bifunctional serine/threonine kinase and phosphorylase involved in the regulation of the phosphoenolpyruvate synthase (PEPS) by catalyzing its phosphorylation/dephosphorylation. This is Putative phosphoenolpyruvate synthase regulatory protein from Bordetella avium (strain 197N).